The sequence spans 103 residues: Somatostatin-2 (103 aa).

Positions 1 to 21 (MLGSAGTLLLLLLAWGARALS) are cleaved as a signal peptide. A propeptide spanning residues 22–87 (QPDDNRITTG…VKFPRLSLRE (66 aa)) is cleaved from the precursor. A disulfide bond links cysteine 92 and cysteine 103.

Belongs to the somatostatin family.

The protein localises to the secreted. In terms of biological role, somatostatin inhibits the release of somatotropin. The chain is Somatostatin-2 (sst2) from Pelophylax ridibundus (Marsh frog).